We begin with the raw amino-acid sequence, 315 residues long: Eukaryotic translation initiation factor 2 subunit 1 (315 aa).

The S1 motif domain occupies 17-88 (EDVVMVNVRS…EKGYIDLSKR (72 aa)). The residue at position 49 (Ser49) is a Phosphoserine; by HRI. The residue at position 52 (Ser52) is a Phosphoserine. Lys141 bears the N6-acetyllysine mark. Ser158 is subject to Phosphoserine. Thr279 and Thr281 each carry phosphothreonine. The disordered stretch occupies residues 293-315 (LERENAEVDGDDDAEEMEAKAED). Positions 299–308 (EVDGDDDAEE) are enriched in acidic residues.

The protein belongs to the eIF-2-alpha family. Eukaryotic translation initiation factor 2 eIF2 is a heterotrimeric complex composed of an alpha (EIF2S1), a beta (EIF2S2) and a gamma (EIF2S3) chain. eIF2 is member of the 43S pre-initiation complex (43S PIC). eIF2 forms a complex with at least CELF1/CUGBP1, CALR, CALR3, EIF2S1, EIF2S2, HSP90B1 and HSPA5. Interaction with METAP2 protects EIF2S1 from inhibitory phosphorylation. Interacts with ABCF1 isoform 2. Associates with ribosomes. Interacts with DDX3X in an RNA-independent manner. Interacts with CDC123. As to quaternary structure, (Microbial infection) Interacts with rotavirus A non-structural protein 2; this interaction probably plays a role in the sequestration of IF2A in viral factories. Interacts with rotavirus A non-structural protein 5; this interaction probably plays a role in its sequestration in viral factories. Phosphorylation at Ser-49 and Ser-52 stabilizes the eIF-2/GDP/eIF2B complex and prevents GDP/GTP exchange reaction, thus impairing the recycling of eIF-2 between successive rounds of initiation and leading to global inhibition of translation, while concomitantly initiating the preferential translation of integrated stress response (ISR)-specific mRNAs. Substrate for at least 4 kinases: EIF2AK1/HRI, EIF2AK2/PKR, EIF2AK3/PERK and EIF2AK4/GCN2. Phosphorylation on Ser-52 by the EIF2AK4/GCN2 protein kinase occurs in response to amino acid starvation and UV irradiation. Phosphorylation at Ser-52 by the EIF2AK3/PERK protein kinase occurs in response to the unfolded protein response. Phosphorylation at Ser-52 by EIF2AK1/HRI in response to mitochondrial damage promotes relocalization to the mitochondrial surface. In terms of processing, (Microbial infection) Phosphorylation by vaccinia virus protein E3 and rotavirus A stabilizes the eIF-2/GDP/eIF2B complex and prevents GDP/GTP exchange reaction, thus impairing the recycling of eIF-2 between successive rounds of initiation and leading to global inhibition of translation.

The protein localises to the cytoplasm. It localises to the stress granule. Its subcellular location is the cytosol. The protein resides in the mitochondrion. Its activity is regulated as follows. Activity is regulated by phosphorylation at Ser-49 and Ser-52, which stabilizes the eIF2/GDP/eIF2B complex and prevents the eIF2B-mediated exchange of GDP for GTP, thereby preventing the formation of the 43S pre-initiation complex (43S PIC). This results in the global attenuation of 5' cap-dependent protein synthesis and concomitant translation of ISR-specific mRNAs that contain a short upstream open reading frame (uORF) in their 5' UTR, such as ATF4, ATF5, DDIT3/CHOP and PPP1R15A/GADD34. Its function is as follows. Member of the eIF2 complex that functions in the early steps of protein synthesis by forming a ternary complex with GTP and initiator tRNA. This complex binds to a 40S ribosomal subunit, followed by mRNA binding to form a 43S pre-initiation complex (43S PIC). Junction of the 60S ribosomal subunit to form the 80S initiation complex is preceded by hydrolysis of the GTP bound to eIF2 and release of an eIF2-GDP binary complex. In order for eIF2 to recycle and catalyze another round of initiation, the GDP bound to eIF2 must exchange with GTP by way of a reaction catalyzed by eIF2B. EIF2S1/eIF2-alpha is a key component of the integrated stress response (ISR), required for adaptation to various stress: phosphorylation by metabolic-stress sensing protein kinases (EIF2AK1/HRI, EIF2AK2/PKR, EIF2AK3/PERK and EIF2AK4/GCN2) in response to stress converts EIF2S1/eIF2-alpha in a global protein synthesis inhibitor, leading to an attenuation of cap-dependent translation, while concomitantly initiating the preferential translation of ISR-specific mRNAs, such as the transcriptional activators ATF4 and QRICH1, and hence allowing ATF4- and QRICH1-mediated reprogramming. EIF2S1/eIF2-alpha also acts as an activator of mitophagy in response to mitochondrial damage: phosphorylation by EIF2AK1/HRI promotes relocalization to the mitochondrial surface, thereby triggering PRKN-independent mitophagy. In Homo sapiens (Human), this protein is Eukaryotic translation initiation factor 2 subunit 1.